The sequence spans 142 residues: Hemoglobin subunit beta-C (142 aa).

Residues 1 to 142 enclose the Globin domain; it reads MPNKALITGF…VASALAHRYH (142 aa). The heme b site is built by His59 and His88.

It belongs to the globin family. As to quaternary structure, heterotetramer of two alpha chains and two beta chains. Red blood cells.

Its function is as follows. Involved in oxygen transport from the lung to the various peripheral tissues. This Capra hircus (Goat) protein is Hemoglobin subunit beta-C (HBBC).